The primary structure comprises 595 residues: Arginine--tRNA ligase (595 aa).

A 'HIGH' region motif is present at residues Ala132 to His142.

Belongs to the class-I aminoacyl-tRNA synthetase family. Monomer.

The protein resides in the cytoplasm. It catalyses the reaction tRNA(Arg) + L-arginine + ATP = L-arginyl-tRNA(Arg) + AMP + diphosphate. The polypeptide is Arginine--tRNA ligase (Cupriavidus necator (strain ATCC 17699 / DSM 428 / KCTC 22496 / NCIMB 10442 / H16 / Stanier 337) (Ralstonia eutropha)).